The chain runs to 315 residues: MDQYSNLFAFEDYLGAQARSIPDLPEVDVLSPRVVRVLGGNPGQMQLQGTNTYILGTGAERLLIDSGQGRARWEQLMASLAAEHKFRISTVLLTHWHLDHTGGVPHLFRIFPELRGANAIYKYHPDPSQQAIVDGQVFSVEGATVRAVFTPGHSTDHMCFLLQEEEAIFTGDTVLGHGTTGVEDLEEYMQSLRKIQSLGCRIGYPGHGAVIENMQQKVQQEIDRKQRRERQVLLALQNIQREKRTVGDANGAATQAELIEAIFGRLPADVADRFFAPYMKDILMKMARDKQVGFRFKGGQKHWFANVSQENPVCR.

4 residues coordinate Zn(2+): His-95, His-97, Asp-99, and His-100. Residue Asp-99 is the Proton donor/acceptor of the active site.

The protein belongs to the metallo-beta-lactamase superfamily. Zn(2+) serves as cofactor. As to expression, endocrocin is specifically produced in conidia.

It catalyses the reaction atrochrysone carboxyl-[ACP] + H2O = atrochrysone carboxylate + holo-[ACP] + H(+). Functionally, atrochrysone carboxyl ACP thioesterase; part of the gene cluster that mediates the biosynthesis of endocrocin, a simple anthraquinone interesting for many biotechnological applications. The pathway begins with the synthesis of atrochrysone thioester by the polyketide synthase (PKS) encA. The atrochrysone carboxyl ACP thioesterase encB then breaks the thioester bond and releases the atrochrysone carboxylic acid from encA. The atrochrysone carboxylic acid is then converted to endocrocin anthrone which is further oxidized into endocrocin by the anthrone oxygenase encC. The exact function of encD has not been identified yet, but it negatively regulates endocrocin production, likely through the modification of endocrocin itself. The chain is Atrochrysone carboxyl ACP thioesterase from Aspergillus fumigatus (strain ATCC MYA-4609 / CBS 101355 / FGSC A1100 / Af293) (Neosartorya fumigata).